The following is a 100-amino-acid chain: Urease subunit gamma (100 aa).

It belongs to the urease gamma subunit family. Heterotrimer of UreA (gamma), UreB (beta) and UreC (alpha) subunits. Three heterotrimers associate to form the active enzyme.

The protein resides in the cytoplasm. The catalysed reaction is urea + 2 H2O + H(+) = hydrogencarbonate + 2 NH4(+). Its pathway is nitrogen metabolism; urea degradation; CO(2) and NH(3) from urea (urease route): step 1/1. The polypeptide is Urease subunit gamma (Escherichia coli O157:H7 (strain EC4115 / EHEC)).